The sequence spans 309 residues: NAD kinase (309 aa).

Asp-89 (proton acceptor) is an active-site residue. NAD(+) is bound by residues 89–90 (DG), 163–164 (NE), His-174, Arg-191, Asp-193, and 204–209 (TAYALS).

It belongs to the NAD kinase family. It depends on a divalent metal cation as a cofactor.

The protein localises to the cytoplasm. The enzyme catalyses NAD(+) + ATP = ADP + NADP(+) + H(+). Functionally, involved in the regulation of the intracellular balance of NAD and NADP, and is a key enzyme in the biosynthesis of NADP. Catalyzes specifically the phosphorylation on 2'-hydroxyl of the adenosine moiety of NAD to yield NADP. This Shewanella baltica (strain OS155 / ATCC BAA-1091) protein is NAD kinase.